Consider the following 127-residue polypeptide: Small ribosomal subunit protein bS6 (127 aa).

This sequence belongs to the bacterial ribosomal protein bS6 family.

In terms of biological role, binds together with bS18 to 16S ribosomal RNA. The chain is Small ribosomal subunit protein bS6 from Buchnera aphidicola subsp. Cinara cedri (strain Cc).